Consider the following 228-residue polypeptide: uncharacterized protein (228 aa).

Residues 99-207 enclose the tRNA-binding domain; sequence LANKVPFVVC…PKIKVGKPFI (109 aa).

This is an uncharacterized protein from Mycoplasma genitalium (strain ATCC 33530 / DSM 19775 / NCTC 10195 / G37) (Mycoplasmoides genitalium).